A 428-amino-acid polypeptide reads, in one-letter code: Bifunctional protein GlmU (428 aa).

Residues 1-221 (MDIVILAAGC…ERKAMGINTR (221 aa)) are pyrophosphorylase. Residues 6-9 (LAAG), K20, Q74, 79-80 (GT), 103-105 (YGD), G140, and N219 each bind UDP-N-acetyl-alpha-D-glucosamine. Position 105 (D105) interacts with Mg(2+). N219 serves as a coordination point for Mg(2+). Residues 222–242 (ADLAIAESYFQCMKRASFLQS) form a linker region. Residues 243 to 428 (GVTLTSPDQV…TTKPEYKTRR (186 aa)) form an N-acetyltransferase region. The UDP-N-acetyl-alpha-D-glucosamine site is built by R308 and K326. The Proton acceptor role is filled by H338. 2 residues coordinate UDP-N-acetyl-alpha-D-glucosamine: Y341 and N352. Acetyl-CoA-binding positions include A355, 361–362 (NY), A398, and R415.

It in the N-terminal section; belongs to the N-acetylglucosamine-1-phosphate uridyltransferase family. In the C-terminal section; belongs to the transferase hexapeptide repeat family. As to quaternary structure, homotrimer. Mg(2+) serves as cofactor.

It localises to the cytoplasm. The catalysed reaction is alpha-D-glucosamine 1-phosphate + acetyl-CoA = N-acetyl-alpha-D-glucosamine 1-phosphate + CoA + H(+). It catalyses the reaction N-acetyl-alpha-D-glucosamine 1-phosphate + UTP + H(+) = UDP-N-acetyl-alpha-D-glucosamine + diphosphate. The protein operates within nucleotide-sugar biosynthesis; UDP-N-acetyl-alpha-D-glucosamine biosynthesis; N-acetyl-alpha-D-glucosamine 1-phosphate from alpha-D-glucosamine 6-phosphate (route II): step 2/2. Its pathway is nucleotide-sugar biosynthesis; UDP-N-acetyl-alpha-D-glucosamine biosynthesis; UDP-N-acetyl-alpha-D-glucosamine from N-acetyl-alpha-D-glucosamine 1-phosphate: step 1/1. It participates in bacterial outer membrane biogenesis; LPS lipid A biosynthesis. Functionally, catalyzes the last two sequential reactions in the de novo biosynthetic pathway for UDP-N-acetylglucosamine (UDP-GlcNAc). The C-terminal domain catalyzes the transfer of acetyl group from acetyl coenzyme A to glucosamine-1-phosphate (GlcN-1-P) to produce N-acetylglucosamine-1-phosphate (GlcNAc-1-P), which is converted into UDP-GlcNAc by the transfer of uridine 5-monophosphate (from uridine 5-triphosphate), a reaction catalyzed by the N-terminal domain. The sequence is that of Bifunctional protein GlmU from Anaplasma marginale (strain Florida).